A 323-amino-acid chain; its full sequence is Serine/threonine-protein phosphatase PP1-gamma catalytic subunit (323 aa).

4 residues coordinate Mn(2+): D64, H66, D92, and N124. The active-site Proton donor is the H125. Mn(2+) is bound by residues H173 and H248. Residues 300–323 (EKKKPNASRPVTPPRGMITKQAKK) form a disordered region.

This sequence belongs to the PPP phosphatase family. PP-1 subfamily. PP1 comprises a catalytic subunit, ppp1c1, ppp1cb or ppp1cc, which is folded into its native form by inhibitor 2 and glycogen synthetase kinase 3, and then is complexed to one or several targeting or regulatory subunits. It depends on Mn(2+) as a cofactor.

Its subcellular location is the cytoplasm. It localises to the nucleus. It is found in the cleavage furrow. The protein resides in the nucleolus. The protein localises to the nucleoplasm. Its subcellular location is the chromosome. It localises to the centromere. It is found in the kinetochore. The protein resides in the nucleus speckle. The protein localises to the midbody. Its subcellular location is the mitochondrion. It localises to the cytoskeleton. It is found in the microtubule organizing center. The enzyme catalyses O-phospho-L-seryl-[protein] + H2O = L-seryl-[protein] + phosphate. It carries out the reaction O-phospho-L-threonyl-[protein] + H2O = L-threonyl-[protein] + phosphate. In terms of biological role, protein phosphatase 1 (PP1) is essential for cell division, and participates in the regulation of glycogen metabolism, muscle contractility and protein synthesis. Promotes nuclear envelope reassembly by targeting nuclear membrane vesicles to chromatin at the end of mitosis. Acts by dephosphorylating membrane proteins such as lamin B receptor (lbr) to regulate the binding of membrane proteins to chromatin. The protein is Serine/threonine-protein phosphatase PP1-gamma catalytic subunit of Xenopus tropicalis (Western clawed frog).